Consider the following 35-residue polypeptide: uncharacterized protein (35 aa).

The helical transmembrane segment at leucine 10–leucine 30 threads the bilayer.

Its subcellular location is the membrane. This is an uncharacterized protein from Salmonella paratyphi A (strain ATCC 9150 / SARB42).